The following is a 434-amino-acid chain: A-adding tRNA nucleotidyltransferase (434 aa).

20–23 (GAVR) is a binding site for ATP. Mg(2+) is bound by residues aspartate 33 and aspartate 35. Residues 91–92 (RD), asparagine 96, 132–141 (DPLRAWRAAR), and arginine 177 contribute to the ATP site. Positions 227–339 (VFEHGVEALH…ELLPDLLSLM (113 aa)) constitute an HD domain.

This sequence belongs to the tRNA nucleotidyltransferase/poly(A) polymerase family. Mg(2+) is required as a cofactor.

It carries out the reaction a tRNA with a 3' CC end + ATP = a tRNA with a 3' CCA end + diphosphate. TRNA nucleotidyltransferase involved in the synthesis of the tRNA CCA terminus. Adds the terminal adenosine residue to tRNA. The protein is A-adding tRNA nucleotidyltransferase of Deinococcus radiodurans (strain ATCC 13939 / DSM 20539 / JCM 16871 / CCUG 27074 / LMG 4051 / NBRC 15346 / NCIMB 9279 / VKM B-1422 / R1).